Reading from the N-terminus, the 285-residue chain is Probable fructose-bisphosphate aldolase (285 aa).

Position 50 (Ser-50) interacts with D-glyceraldehyde 3-phosphate. The Proton donor role is filled by Asp-85. Zn(2+)-binding residues include His-86, Asp-107, Glu-137, and His-181. Gly-182 provides a ligand contact to dihydroxyacetone phosphate. His-209 lines the Zn(2+) pocket. Dihydroxyacetone phosphate-binding positions include 210–212 and 231–234; these read GGT and NVNT. A phosphothreonine mark is found at Thr-212 and Thr-234.

It belongs to the class II fructose-bisphosphate aldolase family. The cofactor is Zn(2+). In terms of processing, phosphorylated during sporulation.

The catalysed reaction is beta-D-fructose 1,6-bisphosphate = D-glyceraldehyde 3-phosphate + dihydroxyacetone phosphate. Its pathway is carbohydrate degradation; glycolysis; D-glyceraldehyde 3-phosphate and glycerone phosphate from D-glucose: step 4/4. In terms of biological role, catalyzes the aldol condensation of dihydroxyacetone phosphate (DHAP or glycerone-phosphate) with glyceraldehyde 3-phosphate (G3P) to form fructose 1,6-bisphosphate (FBP) in gluconeogenesis and the reverse reaction in glycolysis. In Bacillus subtilis (strain 168), this protein is Probable fructose-bisphosphate aldolase (fbaA).